The sequence spans 1416 residues: Gag-Pro-Pol polyprotein (1416 aa).

Gly2 carries N-myristoyl glycine; by host lipidation. Positions 100 to 103 match the PPXY motif motif; sequence PPPY. 2 consecutive CCHC-type zinc fingers follow at residues 345 to 362 and 370 to 387; these read GPCY…DCPT and GPCP…DCPT. The region spanning 447 to 525 is the Peptidase A2 domain; the sequence is ALMLVDTGAE…DKWQILGRDV (79 aa). Asp452 serves as the catalytic Protease; shared with dimeric partner. In terms of domain architecture, Reverse transcriptase spans 586-776; it reads LEAGYISPWD…SPVPFLGQMV (191 aa). Asp652, Asp727, Asp728, Asp1005, Glu1036, Asp1057, Asp1118, Asp1190, and Asp1247 together coordinate Mg(2+). The RNase H type-1 domain occupies 996–1126; that stretch reads IPAALCLFSD…VDQLLPLETP (131 aa). In terms of domain architecture, Integrase catalytic spans 1179-1343; sequence RGWAPNHIWQ…SPPLAVISEG (165 aa). The segment at residues 1352 to 1400 is a DNA-binding region (integrase-type); it reads KLFLYKLPGQNNRRWLGPLPALVEASGGALLATNPPVWVPWRLLKAFKC.

The protein belongs to the retroviral Pol polyprotein family. As to quaternary structure, homodimer; the homodimers are part of the immature particles. Interacts with human TSG101 and NEDD4; these interactions are essential for budding and release of viral particles. Homodimer; further assembles as homohexamers. It depends on Mg(2+) as a cofactor. In terms of processing, phosphorylation of the matrix protein p15 by MAPK1 seems to play a role in budding. Post-translationally, myristoylated. Myristoylation of the matrix (MA) domain mediates the transport and binding of Gag polyproteins to the host plasma membrane and is required for the assembly of viral particles. Specific enzymatic cleavages by the viral protease yield mature proteins. The polyprotein is cleaved during and after budding, this process is termed maturation. The protease is autoproteolytically processed at its N- and C-termini.

The protein resides in the virion. It catalyses the reaction Endonucleolytic cleavage to 5'-phosphomonoester.. It carries out the reaction DNA(n) + a 2'-deoxyribonucleoside 5'-triphosphate = DNA(n+1) + diphosphate. Its function is as follows. The matrix domain targets Gag, Gag-Pro and Gag-Pro-Pol polyproteins to the plasma membrane via a multipartite membrane binding signal, that includes its myristoylated N-terminus. Matrix protein. In terms of biological role, forms the spherical core of the virus that encapsulates the genomic RNA-nucleocapsid complex. Functionally, binds strongly to viral nucleic acids and promote their aggregation. Also destabilizes the nucleic acids duplexes via highly structured zinc-binding motifs. Its function is as follows. The aspartyl protease mediates proteolytic cleavages of Gag and Gag-Pol polyproteins during or shortly after the release of the virion from the plasma membrane. Cleavages take place as an ordered, step-wise cascade to yield mature proteins. This process is called maturation. Displays maximal activity during the budding process just prior to particle release from the cell. RT is a multifunctional enzyme that converts the viral RNA genome into dsDNA in the cytoplasm, shortly after virus entry into the cell. This enzyme displays a DNA polymerase activity that can copy either DNA or RNA templates, and a ribonuclease H (RNase H) activity that cleaves the RNA strand of RNA-DNA heteroduplexes in a partially processive 3' to 5'-endonucleasic mode. Conversion of viral genomic RNA into dsDNA requires many steps. A tRNA-Pro binds to the primer-binding site (PBS) situated at the 5'-end of the viral RNA. RT uses the 3' end of the tRNA primer to perform a short round of RNA-dependent minus-strand DNA synthesis. The reading proceeds through the U5 region and ends after the repeated (R) region which is present at both ends of viral RNA. The portion of the RNA-DNA heteroduplex is digested by the RNase H, resulting in a ssDNA product attached to the tRNA primer. This ssDNA/tRNA hybridizes with the identical R region situated at the 3' end of viral RNA. This template exchange, known as minus-strand DNA strong stop transfer, can be either intra- or intermolecular. RT uses the 3' end of this newly synthesized short ssDNA to perform the RNA-dependent minus-strand DNA synthesis of the whole template. RNase H digests the RNA template except for a polypurine tract (PPT) situated at the 5' end of the genome. It is not clear if both polymerase and RNase H activities are simultaneous. RNase H probably can proceed both in a polymerase-dependent (RNA cut into small fragments by the same RT performing DNA synthesis) and a polymerase-independent mode (cleavage of remaining RNA fragments by free RTs). Secondly, RT performs DNA-directed plus-strand DNA synthesis using the PPT that has not been removed by RNase H as primer. PPT and tRNA primers are then removed by RNase H. The 3' and 5' ssDNA PBS regions hybridize to form a circular dsDNA intermediate. Strand displacement synthesis by RT to the PBS and PPT ends produces a blunt ended, linear dsDNA copy of the viral genome that includes long terminal repeats (LTRs) at both ends. In terms of biological role, catalyzes viral DNA integration into the host chromosome, by performing a series of DNA cutting and joining reactions. This is Gag-Pro-Pol polyprotein (pol) from Bos taurus (Bovine).